Consider the following 228-residue polypeptide: L-ribulose-5-phosphate 4-epimerase UlaF (228 aa).

Substrate is bound by residues 26–27 (GN), 43–44 (SG), and 72–73 (SS). Positions 74, 93, and 95 each coordinate Zn(2+). D118 (proton donor/acceptor) is an active-site residue. H167 lines the Zn(2+) pocket. Catalysis depends on Y225, which acts as the Proton donor/acceptor.

This sequence belongs to the aldolase class II family. AraD/FucA subfamily. The cofactor is Zn(2+).

It carries out the reaction L-ribulose 5-phosphate = D-xylulose 5-phosphate. The protein operates within cofactor degradation; L-ascorbate degradation; D-xylulose 5-phosphate from L-ascorbate: step 4/4. Catalyzes the isomerization of L-ribulose 5-phosphate to D-xylulose 5-phosphate. Is involved in the anaerobic L-ascorbate utilization. The sequence is that of L-ribulose-5-phosphate 4-epimerase UlaF from Shigella sonnei (strain Ss046).